A 234-amino-acid polypeptide reads, in one-letter code: UPF0173 metal-dependent hydrolase Atu1317 (234 aa).

It belongs to the UPF0173 family.

The polypeptide is UPF0173 metal-dependent hydrolase Atu1317 (Agrobacterium fabrum (strain C58 / ATCC 33970) (Agrobacterium tumefaciens (strain C58))).